We begin with the raw amino-acid sequence, 59 residues long: UPF0509 protein KPN78578_12530 (59 aa).

It belongs to the UPF0509 family.

The protein is UPF0509 protein KPN78578_12530 of Klebsiella pneumoniae subsp. pneumoniae (strain ATCC 700721 / MGH 78578).